A 456-amino-acid chain; its full sequence is Bifunctional protein GlmU (456 aa).

The segment at 1–229 (MSTSPLSVVI…LSEVEGVNNR (229 aa)) is pyrophosphorylase. UDP-N-acetyl-alpha-D-glucosamine contacts are provided by residues 11 to 14 (LAAG), Lys-25, Gln-76, 81 to 82 (GT), 103 to 105 (YGD), Gly-140, Glu-154, Asn-169, and Asn-227. Asp-105 contributes to the Mg(2+) binding site. Asn-227 is a Mg(2+) binding site. The segment at 230-250 (LQLSALERAYQQQQAQRLLLA) is linker. An N-acetyltransferase region spans residues 251-456 (GVMLTDPARF…SGWERPVKKK (206 aa)). UDP-N-acetyl-alpha-D-glucosamine contacts are provided by Arg-333 and Lys-351. Catalysis depends on His-363, which acts as the Proton acceptor. 2 residues coordinate UDP-N-acetyl-alpha-D-glucosamine: Tyr-366 and Asn-377. Residues Ala-380, 386–387 (NY), Ser-405, Ala-423, and Arg-440 contribute to the acetyl-CoA site.

It in the N-terminal section; belongs to the N-acetylglucosamine-1-phosphate uridyltransferase family. The protein in the C-terminal section; belongs to the transferase hexapeptide repeat family. Homotrimer. It depends on Mg(2+) as a cofactor.

The protein resides in the cytoplasm. It carries out the reaction alpha-D-glucosamine 1-phosphate + acetyl-CoA = N-acetyl-alpha-D-glucosamine 1-phosphate + CoA + H(+). The enzyme catalyses N-acetyl-alpha-D-glucosamine 1-phosphate + UTP + H(+) = UDP-N-acetyl-alpha-D-glucosamine + diphosphate. It functions in the pathway nucleotide-sugar biosynthesis; UDP-N-acetyl-alpha-D-glucosamine biosynthesis; N-acetyl-alpha-D-glucosamine 1-phosphate from alpha-D-glucosamine 6-phosphate (route II): step 2/2. Its pathway is nucleotide-sugar biosynthesis; UDP-N-acetyl-alpha-D-glucosamine biosynthesis; UDP-N-acetyl-alpha-D-glucosamine from N-acetyl-alpha-D-glucosamine 1-phosphate: step 1/1. It participates in bacterial outer membrane biogenesis; LPS lipid A biosynthesis. Its function is as follows. Catalyzes the last two sequential reactions in the de novo biosynthetic pathway for UDP-N-acetylglucosamine (UDP-GlcNAc). The C-terminal domain catalyzes the transfer of acetyl group from acetyl coenzyme A to glucosamine-1-phosphate (GlcN-1-P) to produce N-acetylglucosamine-1-phosphate (GlcNAc-1-P), which is converted into UDP-GlcNAc by the transfer of uridine 5-monophosphate (from uridine 5-triphosphate), a reaction catalyzed by the N-terminal domain. In Edwardsiella ictaluri (strain 93-146), this protein is Bifunctional protein GlmU.